The primary structure comprises 36 residues: Termicin (36 aa).

3 disulfides stabilise this stretch: cysteine 2/cysteine 24, cysteine 7/cysteine 29, and cysteine 11/cysteine 31. A Glycine amide modification is found at glycine 36.

In terms of tissue distribution, expressed in salivary glands and hemocytes.

Its subcellular location is the secreted. Weak activity against Gram-positive bacteria B.megaterium, S.pyogenes and M.luteus, strong activity against yeasts C.albicans, C.neoformans and S.cerevisiae and filamentous fungi F.oxysporum, F.culmorum, N.crassa and N.hematococca. Less active against filamentous fungus T.viride. Inactive against Gram-positive bacteria A.viridans and S.aureus, filamentous fungi A.fumigatus and B.bassiana and yeast C.glabrata. This Pseudacanthotermes spiniger protein is Termicin.